The sequence spans 161 residues: NAD(P)H-quinone oxidoreductase subunit I, chloroplastic (161 aa).

4Fe-4S ferredoxin-type domains lie at 55-84 (GRIHFEFDKCIACEVCVRVCPIDLPIVDWK) and 95-124 (LNYSIDFGICIFCGNCIEYCPTNCLSMTEE). Residues Cys64, Cys67, Cys70, Cys74, Cys104, Cys107, Cys110, and Cys114 each contribute to the [4Fe-4S] cluster site.

Belongs to the complex I 23 kDa subunit family. In terms of assembly, NDH is composed of at least 16 different subunits, 5 of which are encoded in the nucleus. It depends on [4Fe-4S] cluster as a cofactor.

The protein resides in the plastid. It localises to the chloroplast thylakoid membrane. It catalyses the reaction a plastoquinone + NADH + (n+1) H(+)(in) = a plastoquinol + NAD(+) + n H(+)(out). The enzyme catalyses a plastoquinone + NADPH + (n+1) H(+)(in) = a plastoquinol + NADP(+) + n H(+)(out). In terms of biological role, NDH shuttles electrons from NAD(P)H:plastoquinone, via FMN and iron-sulfur (Fe-S) centers, to quinones in the photosynthetic chain and possibly in a chloroplast respiratory chain. The immediate electron acceptor for the enzyme in this species is believed to be plastoquinone. Couples the redox reaction to proton translocation, and thus conserves the redox energy in a proton gradient. This Phaseolus vulgaris (Kidney bean) protein is NAD(P)H-quinone oxidoreductase subunit I, chloroplastic.